Here is a 517-residue protein sequence, read N- to C-terminus: Anthranilate--CoA ligase (517 aa).

161–172 (LQYTSGSTGAPK) serves as a coordination point for AMP.

The protein belongs to the ATP-dependent AMP-binding enzyme family. In terms of assembly, monomer.

It carries out the reaction anthranilate + ATP + CoA = anthraniloyl-CoA + AMP + diphosphate. In terms of biological role, catalyzes the formation of anthraniloyl-CoA, which is the priming step for entry into the Pseudomonas quinolone signal (PQS) biosynthetic pathway. Also active on a variety of aromatic substrates, including benzoate and chloro and fluoro derivatives of anthranilate. The sequence is that of Anthranilate--CoA ligase (pqsA) from Pseudomonas aeruginosa (strain ATCC 15692 / DSM 22644 / CIP 104116 / JCM 14847 / LMG 12228 / 1C / PRS 101 / PAO1).